We begin with the raw amino-acid sequence, 466 residues long: Ribulose bisphosphate carboxylase large chain (466 aa).

Lys5 bears the N6,N6,N6-trimethyllysine mark. Substrate-binding residues include Asn114 and Thr164. Lys166 (proton acceptor) is an active-site residue. A substrate-binding site is contributed by Lys168. Residues Lys192, Asp194, and Glu195 each contribute to the Mg(2+) site. The residue at position 192 (Lys192) is an N6-carboxylysine. His285 functions as the Proton acceptor in the catalytic mechanism. Positions 286, 318, and 370 each coordinate substrate.

The protein belongs to the RuBisCO large chain family. Type I subfamily. In terms of assembly, heterohexadecamer of 8 large chains and 8 small chains; disulfide-linked. The disulfide link is formed within the large subunit homodimers. Mg(2+) serves as cofactor. Post-translationally, the disulfide bond which can form in the large chain dimeric partners within the hexadecamer appears to be associated with oxidative stress and protein turnover.

It is found in the plastid. The protein resides in the chloroplast. The catalysed reaction is 2 (2R)-3-phosphoglycerate + 2 H(+) = D-ribulose 1,5-bisphosphate + CO2 + H2O. The enzyme catalyses D-ribulose 1,5-bisphosphate + O2 = 2-phosphoglycolate + (2R)-3-phosphoglycerate + 2 H(+). In terms of biological role, ruBisCO catalyzes two reactions: the carboxylation of D-ribulose 1,5-bisphosphate, the primary event in carbon dioxide fixation, as well as the oxidative fragmentation of the pentose substrate in the photorespiration process. Both reactions occur simultaneously and in competition at the same active site. This chain is Ribulose bisphosphate carboxylase large chain, found in Betula nigra (River birch).